Consider the following 257-residue polypeptide: Protein IMPACT homolog (257 aa).

Residues 9-102 (AEIESLASIF…SLVQDFIRDL (94 aa)) form the RWD domain.

The protein belongs to the IMPACT family. As to quaternary structure, interacts with gcn-1; prevents the interaction of gcn-1 with gcn-2 and inhibits gcn-2 kinase activity. Interaction with rpl-39; this interaction occurs in a gcn-1-independent manner. Associates with ribosomes; this interaction occurs in a gcn-1-independent manner. Associates with actin; this interaction occurs in a gcn-1-independent manner.

It is found in the cytoplasm. Translational regulator that ensures constant high levels of translation under amino acid starvation. Plays a role as a negative regulator of the gcn-2 kinase activity; impairs gcn-1-mediated gcn-2 activation, and hence gcn-2-mediated eIF-2-alpha phosphorylation and subsequent down-regulation of protein synthesis in amino acid-starved cells. Plays a role in differentiation of neuronal cells by stimulating neurite outgrowth. This Caenorhabditis elegans protein is Protein IMPACT homolog.